A 341-amino-acid polypeptide reads, in one-letter code: Thromboxane A2 receptor (341 aa).

The Extracellular segment spans residues 1 to 29; it reads MWPNGTSLGACFRPVNITLQERRAIASPW. Residues asparagine 4 and asparagine 16 are each glycosylated (N-linked (GlcNAc...) asparagine). Residues 30–52 traverse the membrane as a helical segment; the sequence is FAASFCALGLGSNLLALSVLAGA. Residues 53-65 lie on the Cytoplasmic side of the membrane; it reads RPGAGPRSSFLAL. Residues 66-86 traverse the membrane as a helical segment; the sequence is LCGLVLTDFLGLLVTGAIVAS. The Extracellular segment spans residues 87 to 105; sequence QHAALLDWRATDPSCRLCY. An intrachain disulfide couples cysteine 104 to cysteine 181. Residues 106–127 form a helical membrane-spanning segment; sequence FMGVAMVFFGLCPLLLGAAMAS. The Cytoplasmic segment spans residues 128-147; that stretch reads ERFVGITRPFSRPTATSRRA. A helical membrane pass occupies residues 148 to 170; sequence WATVGLVWVAAGALGLLPLLGLG. Residues 171-191 are Extracellular-facing; it reads RYSVQYPGSWCFLTLGTQRGD. The chain crosses the membrane as a helical span at residues 192–217; it reads VVFGLIFALLGSASVGLSLLLNTVSV. Residues 218 to 244 are Cytoplasmic-facing; that stretch reads ATLCRVYHTREATQRPRDCEVEMMVQL. A helical membrane pass occupies residues 245 to 268; the sequence is VGIMVVATVCWMPLLVFIMQTLLQ. The Extracellular portion of the chain corresponds to 269-287; sequence TPPVMSFSGQLLRATEHQL. The chain crosses the membrane as a helical span at residues 288–309; the sequence is LIYLRVATWNQILDPWVYILFR. The Cytoplasmic portion of the chain corresponds to 310–341; that stretch reads RSVLRRLHPRFSSQLQAVSLRRPPAQAMLSGP. Serine 328 bears the Phosphoserine mark.

The protein belongs to the G-protein coupled receptor 1 family. In terms of assembly, interacts with RPGRIP1L. Interacts with RACK1; the interaction regulates TBXA2R cell surface expression.

Its subcellular location is the cell membrane. Its function is as follows. Receptor for thromboxane A2 (TXA2), a potent stimulator of platelet aggregation. The activity of this receptor is mediated by a G-protein that activates a phosphatidylinositol-calcium second messenger system. In the kidney, the binding of TXA2 to glomerular TP receptors causes intense vasoconstriction. Activates phospholipase C and adenylyl cyclase. This Mus musculus (Mouse) protein is Thromboxane A2 receptor (Tbxa2r).